Consider the following 290-residue polypeptide: Large ribosomal subunit protein uL3 (290 aa).

An N5-methylglutamine modification is found at Gln152. The segment at 250–290 (ARLAEEQAAAEAESLAQAEAEIAAEGSDAAPEGDADKKDGE) is disordered. A compositionally biased stretch (low complexity) spans 255 to 274 (EQAAAEAESLAQAEAEIAAE).

It belongs to the universal ribosomal protein uL3 family. As to quaternary structure, part of the 50S ribosomal subunit. Forms a cluster with proteins L14 and L19. In terms of processing, methylated by PrmB.

Functionally, one of the primary rRNA binding proteins, it binds directly near the 3'-end of the 23S rRNA, where it nucleates assembly of the 50S subunit. The protein is Large ribosomal subunit protein uL3 of Jannaschia sp. (strain CCS1).